A 190-amino-acid polypeptide reads, in one-letter code: Threonylcarbamoyl-AMP synthase (190 aa).

The YrdC-like domain maps to 7-190 (TGSIAAVVDL…ALTGELFRQG (184 aa)).

The protein belongs to the SUA5 family. TsaC subfamily.

It localises to the cytoplasm. The enzyme catalyses L-threonine + hydrogencarbonate + ATP = L-threonylcarbamoyladenylate + diphosphate + H2O. In terms of biological role, required for the formation of a threonylcarbamoyl group on adenosine at position 37 (t(6)A37) in tRNAs that read codons beginning with adenine. Catalyzes the conversion of L-threonine, HCO(3)(-)/CO(2) and ATP to give threonylcarbamoyl-AMP (TC-AMP) as the acyladenylate intermediate, with the release of diphosphate. The polypeptide is Threonylcarbamoyl-AMP synthase (Salmonella paratyphi A (strain ATCC 9150 / SARB42)).